A 336-amino-acid chain; its full sequence is Fructose-1,6-bisphosphatase class 1 (336 aa).

Mg(2+) is bound by residues Glu-92, Asp-115, Leu-117, and Asp-118. Residues Asp-118 to Ser-121, Asn-211, Tyr-244, Tyr-262 to Tyr-264, and Lys-274 contribute to the substrate site. Position 280 (Glu-280) interacts with Mg(2+).

It belongs to the FBPase class 1 family. In terms of assembly, homotetramer. Requires Mg(2+) as cofactor.

It localises to the cytoplasm. The enzyme catalyses beta-D-fructose 1,6-bisphosphate + H2O = beta-D-fructose 6-phosphate + phosphate. Its pathway is carbohydrate biosynthesis; gluconeogenesis. This Aliivibrio fischeri (strain MJ11) (Vibrio fischeri) protein is Fructose-1,6-bisphosphatase class 1.